Consider the following 103-residue polypeptide: MTSSDEELKELLKQATTYKQDPRHRIPMVDRPSKILTQSNKCRENKARKCSNCTCNKNTNTNNTIYKSKCGSCHLGDPFRCSSCPYKGLPPFNEGDEINFDEL.

The interval 19–103 (KQDPRHRIPM…EGDEINFDEL (85 aa)) is disordered. [2Fe-2S] cluster is bound by residues Cys-42, Cys-50, Cys-53, and Cys-55. Positions 42–55 (CRENKARKCSNCTC) are fe-S binding site A. Residues Cys-70, Cys-73, Cys-81, and Cys-84 each contribute to the [4Fe-4S] cluster site. 2 consecutive short sequence motifs (cx2C motif) follow at residues 70–73 (CGSC) and 81–84 (CSSC). The interval 70 to 84 (CGSCHLGDPFRCSSC) is fe-S binding site B.

The protein belongs to the anamorsin family. In terms of assembly, monomer. Interacts with TAH18. Interacts with MIA40. [4Fe-4S] cluster is required as a cofactor.

It localises to the cytoplasm. The protein resides in the mitochondrion intermembrane space. Component of the cytosolic iron-sulfur (Fe-S) protein assembly (CIA) machinery required for the maturation of extramitochondrial Fe-S proteins. Part of an electron transfer chain functioning in an early step of cytosolic Fe-S biogenesis, facilitating the de novo assembly of a [4Fe-4S] cluster on the scaffold complex CFD1-NBP35. Electrons are transferred to DRE2 from NADPH via the FAD- and FMN-containing protein TAH18. TAH18-DRE2 are also required for the assembly of the diferric tyrosyl radical cofactor of ribonucleotide reductase (RNR), probably by providing electrons for reduction during radical cofactor maturation in the catalytic small subunit RNR2. The chain is Fe-S cluster assembly protein DRE2 (DRE2) from Enterocytozoon bieneusi (strain H348) (Microsporidian parasite).